A 331-amino-acid chain; its full sequence is Glyceraldehyde-3-phosphate dehydrogenase (331 aa).

Residues 12–13, aspartate 34, arginine 78, and threonine 120 contribute to the NAD(+) site; that span reads RI. Residues 149–151, threonine 180, 209–210, and arginine 232 contribute to the D-glyceraldehyde 3-phosphate site; these read SCT and TG. The Nucleophile role is filled by cysteine 150. An NAD(+)-binding site is contributed by asparagine 314.

It belongs to the glyceraldehyde-3-phosphate dehydrogenase family. As to quaternary structure, homotetramer.

It localises to the cytoplasm. The enzyme catalyses D-glyceraldehyde 3-phosphate + phosphate + NAD(+) = (2R)-3-phospho-glyceroyl phosphate + NADH + H(+). The protein operates within carbohydrate degradation; glycolysis; pyruvate from D-glyceraldehyde 3-phosphate: step 1/5. Its function is as follows. Catalyzes the oxidative phosphorylation of glyceraldehyde 3-phosphate (G3P) to 1,3-bisphosphoglycerate (BPG) using the cofactor NAD. The first reaction step involves the formation of a hemiacetal intermediate between G3P and a cysteine residue, and this hemiacetal intermediate is then oxidized to a thioester, with concomitant reduction of NAD to NADH. The reduced NADH is then exchanged with the second NAD, and the thioester is attacked by a nucleophilic inorganic phosphate to produce BPG. The chain is Glyceraldehyde-3-phosphate dehydrogenase (gapA) from Shimwellia blattae (strain ATCC 29907 / DSM 4481 / JCM 1650 / NBRC 105725 / CDC 9005-74) (Escherichia blattae).